A 428-amino-acid chain; its full sequence is Keratin, type I cytoskeletal 18-A (428 aa).

The tract at residues 2–78 (SSSRSVYSSS…NVNLFGGVQN (77 aa)) is head. A disordered region spans residues 24-45 (SAPRFTPGSSAASVHAGAGGSG). Residues 79–114 (EKETMQDLNDRLASYLERVRSLESANKKLEVQIRQH) form a coil 1A region. Residues 79-389 (EKETMQDLND…RLLEGDSFDL (311 aa)) enclose the IF rod domain. Residues 115–130 (TEKKGPAKDWSPYYMT) are linker 1. Positions 131 to 222 (IEDLKKQVFN…KNHQDDVNEL (92 aa)) are coil 1B. Residues 223-246 (QAQIASSAVTVEVDAPKSQDLGKI) are linker 12. The interval 247-384 (MADLRAQYDE…IQTYRRLLEG (138 aa)) is coil 2. Residues 385-428 (DSFDLQDAVPVVTTQTVKKVITTTQRLVDGKVVAESNNTEVIKS) are tail.

The protein belongs to the intermediate filament family. In terms of assembly, heterotetramer of two type I and two type II keratins. Keratin-18 associates with keratin-8. Proteolytically cleaved by caspases during epithelial cell apoptosis. Expressed at high levels in notochord and low levels in adult liver.

In terms of biological role, when phosphorylated, plays a role in filament reorganization. This Xenopus laevis (African clawed frog) protein is Keratin, type I cytoskeletal 18-A (krt18-a).